A 199-amino-acid polypeptide reads, in one-letter code: Nuclear transcription factor Y subunit C-2 (199 aa).

Belongs to the NFYC/HAP5 subunit family. In terms of assembly, heterotrimeric transcription factor composed of three components, NF-YA, NF-YB and NF-YC. NF-YB and NF-YC must interact and dimerize for NF-YA association and DNA binding. Interacts with HTT1 in both cytoplasm and nucleus. Ubiquitous.

It is found in the nucleus. Its subcellular location is the cytoplasm. Its function is as follows. Stimulates the transcription of various genes by recognizing and binding to a CCAAT motif in promoters. The polypeptide is Nuclear transcription factor Y subunit C-2 (NFYC2) (Arabidopsis thaliana (Mouse-ear cress)).